A 417-amino-acid chain; its full sequence is NADH-quinone oxidoreductase subunit D (417 aa).

The protein belongs to the complex I 49 kDa subunit family. In terms of assembly, NDH-1 is composed of 14 different subunits. Subunits NuoB, C, D, E, F, and G constitute the peripheral sector of the complex.

The protein localises to the cell inner membrane. It catalyses the reaction a quinone + NADH + 5 H(+)(in) = a quinol + NAD(+) + 4 H(+)(out). NDH-1 shuttles electrons from NADH, via FMN and iron-sulfur (Fe-S) centers, to quinones in the respiratory chain. The immediate electron acceptor for the enzyme in this species is believed to be ubiquinone. Couples the redox reaction to proton translocation (for every two electrons transferred, four hydrogen ions are translocated across the cytoplasmic membrane), and thus conserves the redox energy in a proton gradient. This chain is NADH-quinone oxidoreductase subunit D, found in Methylobacillus flagellatus (strain ATCC 51484 / DSM 6875 / VKM B-1610 / KT).